The following is a 127-amino-acid chain: Chondrosarcoma-associated gene 2/3 protein (127 aa).

The disordered stretch occupies residues 68-127 (MSRKPRASSPLSNNHPPTPKRRGSGRHPLNPGPEALSKFPRQPGREKGPIKEVPGTKGSP).

Weakly expressed in kidney. Expressed in various tumor cell lines including carcinomas, myeloid and lymphoid malignancies, melanomas and prostate cancer. Overexpressed in taxol-resistant breast cancer line MDA 435TR and the doxorubicin-resistant multiple myelanoma lines RPMI-8226/Dox40 and RPMI-8226/MDR10V.

Its function is as follows. Drug-resistance related protein, its expression is associated with the chemotherapy resistant and neoplastic phenotype. May also be linked to the malignant phenotype. This is Chondrosarcoma-associated gene 2/3 protein (CSAG2) from Homo sapiens (Human).